The chain runs to 171 residues: S-ribosylhomocysteine lyase (171 aa).

Residues H54, H58, and C128 each coordinate Fe cation.

It belongs to the LuxS family. In terms of assembly, homodimer. It depends on Fe cation as a cofactor.

The enzyme catalyses S-(5-deoxy-D-ribos-5-yl)-L-homocysteine = (S)-4,5-dihydroxypentane-2,3-dione + L-homocysteine. Its function is as follows. Involved in the synthesis of autoinducer 2 (AI-2) which is secreted by bacteria and is used to communicate both the cell density and the metabolic potential of the environment. The regulation of gene expression in response to changes in cell density is called quorum sensing. Catalyzes the transformation of S-ribosylhomocysteine (RHC) to homocysteine (HC) and 4,5-dihydroxy-2,3-pentadione (DPD). This is S-ribosylhomocysteine lyase from Pectobacterium carotovorum subsp. carotovorum (strain PC1).